The sequence spans 642 residues: MAAAAAATAAAAASIRERQTVALKRMLNFNVPHIKNSTGEPVWKVLIYDRFGQDIISPLLSVKELRDMGITLHLLLHSDRDPIPDVPAVYFVMPTEENIDRMCQDLRNQLYESYYLNFISAISRSKLEDIANAALAASAVTQVAKVFDQYLNFITLEDDMFVLCNQNKELVSYRAINRPDITDTEMETVMDTIVDSLFCFFVTLGAVPIIRCSRGTAAEMVAVKLDKKLRENLRDARNSLFTGDTLGAGQFSFQRPLLVLVDRNIDLATPLHHTWTYQALVHDVLDFHLNRVNLEESSGVENSPAGARPKRKNKKSYDLTPVDKFWQKHKGSPFPEVAESVQQELESYRAQEDEVKRLKSIMGLEGEDEGAISMLSDNTAKLTSAVSSLPELLEKKRLIDLHTNVATAVLEHIKARKLDVYFEYEEKIMSKTTLDKSLLDIISDPDAGTPEDKMRLFLIYYISTQQAPSEADLEQYKKALTDAGCNLNPLQYIKQWKAFTKMASAPASYGSTTTKPMGLLSRVMNTGSQFVMEGVKNLVLKQQNLPVTRILDNLMEMKSNPETDDYRYFDPKMLRGNDSSVPRNKNPFQEAIVFVVGGGNYIEYQNLVDYIKGKQGKHILYGCSELFNATQFIKQLSQLGQK.

Ala-2 carries the post-translational modification N-acetylalanine. A phosphoserine mark is found at Ser-37, Ser-303, and Ser-528.

Belongs to the STXBP/unc-18/SEC1 family. Interacts with STX17. Interacts with STX5A. Interacts with the COG complex via COG4.

The protein localises to the cytoplasm. It localises to the endoplasmic reticulum membrane. It is found in the golgi apparatus. The protein resides in the golgi stack membrane. Plays a role in SNARE-pin assembly and Golgi-to-ER retrograde transport via its interaction with COG4. Involved in vesicular transport between the endoplasmic reticulum and the Golgi. The chain is Sec1 family domain-containing protein 1 (SCFD1) from Homo sapiens (Human).